The chain runs to 1208 residues: Lysine-specific demethylase JMJ17 (1208 aa).

The PHD-type 1; degenerate zinc finger occupies 1 to 36 (MLLCDSCNKGWHIYCLSPPLKHIPLGNWYCLECLNT). Zn(2+) is bound by residues Cys-4, Cys-7, Cys-30, and Cys-33. The region spanning 126-292 (EYCGSPWNLN…YGGSGAELYR (167 aa)) is the JmjC domain. Fe cation-binding residues include His-172, Glu-174, and His-260. Positions 369, 372, 383, 385, 392, 395, 400, and 402 each coordinate Zn(2+). A C5HC2 zinc finger spans residues 369-421 (CIICQQFLHLSAIVCNCRPSVFACLEHWKHLCECEPTKLRLEYRYTLAELDMM). The Nuclear localization signal motif lies at 613–620 (SKKISSAK). Residues 1099-1145 (MLHCICLKPYNSRSMVSCSQCGEWYHTYCLKLHWRPKAYVCSACCPL) form a PHD-type 2 zinc finger. Residues Cys-1102, Cys-1104, Cys-1116, Cys-1119, His-1124, Cys-1127, Cys-1139, and Cys-1142 each coordinate Zn(2+).

This sequence belongs to the JARID1 histone demethylase family. Fe(2+) serves as cofactor. Expressed in inflorescences, roots, seedlings and siliques, and, at low levels, in leaves and stems.

The protein localises to the nucleus. It catalyses the reaction N(6),N(6),N(6)-trimethyl-L-lysyl(4)-[histone H3] + 2-oxoglutarate + O2 = N(6),N(6)-dimethyl-L-lysyl(4)-[histone H3] + formaldehyde + succinate + CO2. The catalysed reaction is N(6),N(6)-dimethyl-L-lysyl(4)-[histone H3] + 2-oxoglutarate + O2 = N(6)-methyl-L-lysyl(4)-[histone H3] + formaldehyde + succinate + CO2. It carries out the reaction N(6)-methyl-L-lysyl(4)-[histone H3] + 2-oxoglutarate + O2 = L-lysyl(4)-[histone H3] + formaldehyde + succinate + CO2. The enzyme catalyses N(6),N(6),N(6)-trimethyl-L-lysyl(4)-[histone H3] + 3 2-oxoglutarate + 3 O2 = L-lysyl(4)-[histone H3] + 3 formaldehyde + 3 succinate + 3 CO2. Functionally, functions as a histone H3 'Lys-4' (H3K4me) demethylase involved in the regulation of gene expression. Active on H3K4me1, H3K4me2 and H3K4me3. Repressor of the abscisic acid (ABA) signaling pathway, especially during stomatal closure regulation. Negative regulator of responses to dehydration stress by binding directly to the chromatin of SRK2E/OST1 and demethylating H3K4me3 to regulates its expression. Together with JMJ14 and JMJ16, required for plant growth and development. This Arabidopsis thaliana (Mouse-ear cress) protein is Lysine-specific demethylase JMJ17.